We begin with the raw amino-acid sequence, 174 residues long: Actin-related protein 2/3 complex subunit 3 (174 aa).

Belongs to the ARPC3 family. Component of the Arp2/3 complex composed of arpB/Arp2, arpC/Arp3, arcA/p41-arc, arcB/p34-arc, arcC/p21-arc, arcD/p20-arc and arcE/p16-arc. Interacts with carmil (via the region between the LRR domain and COOH-terminal proline-rich domain); carmil is required for Arp2/3-dependent actin nucleation. Arp2/3 complex, MyoB, MyoC, and the alpha and beta subunits of capping protein all form a larger complex with carmil.

The protein localises to the cytoplasm. The protein resides in the cytoskeleton. Its subcellular location is the cytosol. It localises to the cell cortex. It is found in the cell projection. The protein localises to the pseudopodium. Functionally, functions as a component of the Arp2/3 complex which is involved in regulation of actin polymerization and together with an activating nucleation-promoting factor (NPF) mediates the formation of branched actin networks. Seems to contact the pointed end of the daughter actin filament. The Arp2/3 complex is involved in organizing the actin system in cell motility and chemotaxis, in phagocytosis and macropinocytosis, at late steps of endosome processing, and in mitosis. In concert with a group of other proteins, the Arp2/3 complex plays a general role in the rapid activation and adaptation of the actin system to its multiple functions. In Dictyostelium discoideum (Social amoeba), this protein is Actin-related protein 2/3 complex subunit 3 (arcC).